The chain runs to 436 residues: UPF0597 protein YhaM (436 aa).

The protein belongs to the UPF0597 family.

The sequence is that of UPF0597 protein YhaM from Shigella sonnei (strain Ss046).